The following is a 558-amino-acid chain: Dihydroxy-acid dehydratase (558 aa).

Aspartate 81 serves as a coordination point for Mg(2+). [2Fe-2S] cluster is bound at residue cysteine 122. Mg(2+) is bound by residues aspartate 123 and lysine 124. Lysine 124 is subject to N6-carboxylysine. Position 195 (cysteine 195) interacts with [2Fe-2S] cluster. Residue glutamate 447 coordinates Mg(2+). The active-site Proton acceptor is serine 473.

It belongs to the IlvD/Edd family. Homodimer. [2Fe-2S] cluster serves as cofactor. Mg(2+) is required as a cofactor.

It catalyses the reaction (2R)-2,3-dihydroxy-3-methylbutanoate = 3-methyl-2-oxobutanoate + H2O. The enzyme catalyses (2R,3R)-2,3-dihydroxy-3-methylpentanoate = (S)-3-methyl-2-oxopentanoate + H2O. Its pathway is amino-acid biosynthesis; L-isoleucine biosynthesis; L-isoleucine from 2-oxobutanoate: step 3/4. It participates in amino-acid biosynthesis; L-valine biosynthesis; L-valine from pyruvate: step 3/4. Functions in the biosynthesis of branched-chain amino acids. Catalyzes the dehydration of (2R,3R)-2,3-dihydroxy-3-methylpentanoate (2,3-dihydroxy-3-methylvalerate) into 2-oxo-3-methylpentanoate (2-oxo-3-methylvalerate) and of (2R)-2,3-dihydroxy-3-methylbutanoate (2,3-dihydroxyisovalerate) into 2-oxo-3-methylbutanoate (2-oxoisovalerate), the penultimate precursor to L-isoleucine and L-valine, respectively. This chain is Dihydroxy-acid dehydratase, found in Bacillus velezensis (strain DSM 23117 / BGSC 10A6 / LMG 26770 / FZB42) (Bacillus amyloliquefaciens subsp. plantarum).